The sequence spans 253 residues: Tryptophan synthase alpha chain (253 aa).

Residues Glu46 and Asp57 each act as proton acceptor in the active site.

It belongs to the TrpA family. In terms of assembly, tetramer of two alpha and two beta chains.

It catalyses the reaction (1S,2R)-1-C-(indol-3-yl)glycerol 3-phosphate + L-serine = D-glyceraldehyde 3-phosphate + L-tryptophan + H2O. The protein operates within amino-acid biosynthesis; L-tryptophan biosynthesis; L-tryptophan from chorismate: step 5/5. The alpha subunit is responsible for the aldol cleavage of indoleglycerol phosphate to indole and glyceraldehyde 3-phosphate. This Dictyoglomus turgidum (strain DSM 6724 / Z-1310) protein is Tryptophan synthase alpha chain.